The sequence spans 380 residues: MSTTVGQVIRCKAAVAWEAGKPLVMEEVDVAPPQKMEVRLKILYTSLCHTDVYFWEAKGQNPVFPRILGHEAAGIVESVGEGVTELAPGDHVLPVFTGECKDCAHCKSEESNMCSLLRINTDRGVMINDGQSRFSINGKPIYHFVGTSTFSEYTVVHVGCVAKINPLAPLDKVCVLSCGISTGLGATLNVAKPTKGSSVAIFGLGAVGLAAAEGARIAGASRIIGVDLNASRFEQAKKFGVTEFVNPKDYSKPVQEVIAEMTDGGVDRSVECTGHIDAMISAFECVHDGWGVAVLVGVPHKEAVFKTHPMNFLNERTLKGTFFGNYKPRSDIPSVVEKYMNKELELEKFITHTLPFAEINKAFDLMLKGEGLRCIITMED.

Cysteine 48, threonine 50, histidine 70, cysteine 100, cysteine 103, cysteine 106, cysteine 114, and cysteine 178 together coordinate Zn(2+). 2 residues coordinate an alcohol: threonine 50 and histidine 70. Threonine 50 contacts NAD(+). NAD(+) is bound by residues 203-208, aspartate 227, arginine 232, threonine 273, valine 296, 296-298, phenylalanine 323, and arginine 373; these read GLGAVG and VGV.

Belongs to the zinc-containing alcohol dehydrogenase family. Homodimer. Homotetramer. Zn(2+) serves as cofactor.

It localises to the cytoplasm. The catalysed reaction is a primary alcohol + NAD(+) = an aldehyde + NADH + H(+). The enzyme catalyses a secondary alcohol + NAD(+) = a ketone + NADH + H(+). The polypeptide is Alcohol dehydrogenase 3 (ADH3) (Solanum tuberosum (Potato)).